A 209-amino-acid polypeptide reads, in one-letter code: Small ribosomal subunit protein uS4 (209 aa).

The S4 RNA-binding domain maps to 99–160 (ARLDSVAYRM…RARASLRCKA (62 aa)).

This sequence belongs to the universal ribosomal protein uS4 family. Part of the 30S ribosomal subunit. Contacts protein S5. The interaction surface between S4 and S5 is involved in control of translational fidelity.

Functionally, one of the primary rRNA binding proteins, it binds directly to 16S rRNA where it nucleates assembly of the body of the 30S subunit. In terms of biological role, with S5 and S12 plays an important role in translational accuracy. This Dechloromonas aromatica (strain RCB) protein is Small ribosomal subunit protein uS4.